Reading from the N-terminus, the 652-residue chain is DNA ligase (652 aa).

NAD(+) is bound by residues 29–33 (DSQYD), 78–79 (SL), and Glu107. The active-site N6-AMP-lysine intermediate is Lys109. 4 residues coordinate NAD(+): Arg130, Glu164, Lys278, and Lys302. Residues Cys395, Cys398, Cys413, and Cys418 each coordinate Zn(2+). In terms of domain architecture, BRCT spans 577–652 (STDAQLSGLT…IQDEDWLLNL (76 aa)).

This sequence belongs to the NAD-dependent DNA ligase family. LigA subfamily. It depends on Mg(2+) as a cofactor. The cofactor is Mn(2+).

It catalyses the reaction NAD(+) + (deoxyribonucleotide)n-3'-hydroxyl + 5'-phospho-(deoxyribonucleotide)m = (deoxyribonucleotide)n+m + AMP + beta-nicotinamide D-nucleotide.. In terms of biological role, DNA ligase that catalyzes the formation of phosphodiester linkages between 5'-phosphoryl and 3'-hydroxyl groups in double-stranded DNA using NAD as a coenzyme and as the energy source for the reaction. It is essential for DNA replication and repair of damaged DNA. This is DNA ligase from Streptococcus agalactiae serotype III (strain NEM316).